A 92-amino-acid chain; its full sequence is C-C motif chemokine 22 (92 aa).

An N-terminal signal peptide occupies residues 1 to 24; the sequence is MATLRVPLLVALVLLAVAIQTSDA. 2 disulfide bridges follow: Cys36-Cys60 and Cys37-Cys76.

It belongs to the intercrine beta (chemokine CC) family. As to expression, expressed by activated splenic B-lymphocytes and dendritic cells. Low expression in lung, thymocytes, lymph node, and unstimulated splenic cells.

It localises to the secreted. In terms of biological role, chemotactic for activated T-lymphocytes. May play an important role in the collaboration of dendritic cells and B-lymphocytes with T-cells in immune responses. The protein is C-C motif chemokine 22 (Ccl22) of Mus musculus (Mouse).